The primary structure comprises 110 residues: Protein NATD1 (110 aa).

The 91-residue stretch at glutamate 19–glutamine 109 folds into the N-acetyltransferase domain.

It belongs to the NATD1 family. Expressed in the heart, testis, kidney and lung.

This is Protein NATD1 (Natd1) from Mus musculus (Mouse).